The sequence spans 296 residues: MALTSDLGKQIKLKEVEGTLLQPATVDNWSQIQSFEAKPDDLLICTYPKAGTTWIQEIVDMIEQNGDVEKCQRAIIQHRHPFIEWARPPQPSGVEKAKAMPSPRILKTHLSTQLLPPSFWENNCKFLYVARNAKDCMVSYYHFQRMNHMLPDPGTWEEYFETFINGKVVWGSWFDHVKGWWEMKDRHQILFLFYEDIKRDPKHEIRKVMQFMGKKVDETVLDKIVQETSFEKMKENPMTNRSTVSKSILDQSISSFMRKGTVGDWKNHFTVAQNERFDEIYRRKMEGTSINFCMEL.

Position 49–54 (49–54 (KAGTTW)) interacts with 3'-phosphoadenylyl sulfate. 107–109 (KTH) contacts substrate. His109 acts as the Proton acceptor in catalysis. 3'-phosphoadenylyl sulfate-binding positions include Arg131, Ser139, Tyr194, and 228-233 (TSFEKM). The residue at position 139 (Ser139) is a Phosphoserine. Ser254 is subject to Phosphoserine. 256–260 (FMRKG) contacts 3'-phosphoadenylyl sulfate.

The protein belongs to the sulfotransferase 1 family. As to expression, found in adult stomach, kidney and thyroid gland, and in fetal kidney and liver.

It localises to the cytoplasm. The protein localises to the lysosome. The protein resides in the mitochondrion. The enzyme catalyses a phenol + 3'-phosphoadenylyl sulfate = an aryl sulfate + adenosine 3',5'-bisphosphate + H(+). It carries out the reaction cholesterol + 3'-phosphoadenylyl sulfate = cholesterol sulfate + adenosine 3',5'-bisphosphate + H(+). In terms of biological role, sulfotransferase that utilizes 3'-phospho-5'-adenylyl sulfate (PAPS) to catalyze the sulfate conjugation of phenolic compounds. Does not transfer sulfate to steroids, dopamine, acetaminophen, or alpha-naphthol. Except in mitochondria, where it can add sulfate to cholesterol producing cholesterol sulfate, which alters mitochondrial membrane organization, and impacts protein complex mobility increasing state-III respiration, thereby modulating mitochondrial respiration. Catalyzes the sulfation of the carcinogenic N-hydroxy-2-acetylaminofluorene leading to highly reactive intermediates capable of forming DNA adducts, potentially resulting in mutagenesis. The chain is Sulfotransferase 1C2 (SULT1C2) from Homo sapiens (Human).